Consider the following 305-residue polypeptide: Protoheme IX farnesyltransferase 2 (305 aa).

A run of 7 helical transmembrane segments spans residues 38–58, 60–80, 115–135, 157–177, 181–201, 236–256, and 285–305; these read LITTFTGMWLALHISGLSFLG, LNTVLLTLIGSSLIIAGSCAV, ILLIALGLIMLLMTTVMAAVI, INTVVGSVSGAVPPLIGWTAV, IGVVAWVLFMILFIWQIPHFL, VACLLPLPFFLGSLGLPIVIL, and FVYSLNYMTIYFVAMVVFTLF.

Belongs to the UbiA prenyltransferase family. Protoheme IX farnesyltransferase subfamily. In terms of assembly, interacts with CtaA.

The protein resides in the cell membrane. The catalysed reaction is heme b + (2E,6E)-farnesyl diphosphate + H2O = Fe(II)-heme o + diphosphate. Its pathway is porphyrin-containing compound metabolism; heme O biosynthesis; heme O from protoheme: step 1/1. Its function is as follows. Converts heme B (protoheme IX) to heme O by substitution of the vinyl group on carbon 2 of heme B porphyrin ring with a hydroxyethyl farnesyl side group. This Bacillus velezensis (strain DSM 23117 / BGSC 10A6 / LMG 26770 / FZB42) (Bacillus amyloliquefaciens subsp. plantarum) protein is Protoheme IX farnesyltransferase 2.